We begin with the raw amino-acid sequence, 130 residues long: Cyclin-dependent kinase 4 inhibitor B (130 aa).

ANK repeat units lie at residues 5–34 (SSDA…DPNA), 38–66 (FGRR…EPNC), 71–100 (TLTR…RLDV), and 104–130 (WGRL…ATGD). The residue at position 12 (T12) is a Phosphothreonine.

Belongs to the CDKN2 cyclin-dependent kinase inhibitor family. Heterodimer of CDKN2B with CDK4 or CDK6. As to expression, expressed ubiquitously.

Interacts strongly with CDK4 and CDK6. Potent inhibitor. Potential effector of TGF-beta induced cell cycle arrest. The protein is Cyclin-dependent kinase 4 inhibitor B (Cdkn2b) of Mus musculus (Mouse).